The chain runs to 644 residues: Neurofilament medium polypeptide (644 aa).

The interval 1 to 33 (VKVELDKKVQSLQDEVAFLRTNHEEEVADLLAQ) is coil 1B. Residues 1 to 197 (VKVELDKKVQ…KLLEGEETRF (197 aa)) enclose the IF rod domain. Residue serine 11 is modified to Phosphoserine. The tract at residues 34 to 50 (IQASHITVERKDYLKTD) is linker 12. Residues 51-72 (ISSALKEIRSQLECHSDQNMHQ) form a coil 2A region. The linker 2 stretch occupies residues 73 to 76 (AEEW). Positions 77–197 (FKCRYAKLTE…KLLEGEETRF (121 aa)) are coil 2B. Tyrosine 105 carries the post-translational modification Phosphotyrosine. Residues serine 131, serine 203, and serine 215 each carry the phosphoserine modification. The interval 198–643 (STFSGSITGP…HAIVKEVTQS (446 aa)) is tail. O-linked (GlcNAc) threonine glycosylation occurs at threonine 217. A phosphoserine mark is found at serine 253 and serine 269. The interval 270–582 (VKEEEKEEEA…GGDRSEEKVV (313 aa)) is disordered. Over residues 274 to 292 (EKEEEAEGKEEEQEAEEEV) the composition is skewed to acidic residues. A Phosphoserine modification is found at serine 298. Acidic residues predominate over residues 308 to 328 (KEEEGEKEEEGQEEEEEEEDE). Residues 329-350 (GVKSDQAEEGGSEKEGSSKNEG) show a composition bias toward basic and acidic residues. Phosphoserine is present on residues serine 332, serine 340, serine 345, and serine 346. The span at 351–368 (EQEEGETEAEGEVEEAEA) shows a compositional bias: acidic residues. Position 357 is a phosphothreonine (threonine 357). The span at 369-400 (KEEKKTEEKSEEVAAKEEPVTEAKVGKPEKAK) shows a compositional bias: basic and acidic residues. Phosphoserine occurs at positions 401, 406, 442, and 465. The segment covering 422 to 470 (GEQKEEEEKVEEEKKKAAKESPKEEKVEKKEEKPKDVPKKKAESPVKEE) has biased composition (basic and acidic residues). Residues 474-483 (EAATITKPTK) are compositionally biased toward low complexity. The segment covering 485-508 (GLEKETKEGEKPLQQEKEKEKAGE) has biased composition (basic and acidic residues). Phosphoserine occurs at positions 512, 550, and 566. The span at 545–557 (TKEKGSGREEEKG) shows a compositional bias: basic and acidic residues. A compositionally biased stretch (basic and acidic residues) spans 568–582 (ADEKKGGDRSEEKVV).

Belongs to the intermediate filament family. In terms of assembly, forms heterodimers with NEFL; which can further hetero-oligomerize (in vitro). Forms heterodimers with INA (in vitro). There are a number of repeats of the tripeptide K-S-P, NFM is phosphorylated on a number of the serines in this motif. It is thought that phosphorylation of NFM results in the formation of interfilament cross bridges that are important in the maintenance of axonal caliber. In terms of processing, phosphorylation seems to play a major role in the functioning of the larger neurofilament polypeptides (NF-M and NF-H), the levels of phosphorylation being altered developmentally and coincidentally with a change in the neurofilament function. Post-translationally, phosphorylated in the head and rod regions by the PKC kinase PKN1, leading to the inhibition of polymerization.

The protein resides in the cytoplasm. The protein localises to the cytoskeleton. It localises to the cell projection. It is found in the axon. In terms of biological role, neurofilaments usually contain three intermediate filament proteins: NEFL, NEFM, and NEFH which are involved in the maintenance of neuronal caliber. May additionally cooperate with the neuronal intermediate filament proteins PRPH and INA to form neuronal filamentous networks. This Oryctolagus cuniculus (Rabbit) protein is Neurofilament medium polypeptide (NEFM).